The sequence spans 377 residues: Succinyl-diaminopimelate desuccinylase (377 aa).

H68 serves as a coordination point for Zn(2+). The active site involves D70. D101 is a binding site for Zn(2+). The active-site Proton acceptor is the E135. Zn(2+) is bound by residues E136, E164, and H350.

It belongs to the peptidase M20A family. DapE subfamily. In terms of assembly, homodimer. Zn(2+) is required as a cofactor. Requires Co(2+) as cofactor.

It catalyses the reaction N-succinyl-(2S,6S)-2,6-diaminopimelate + H2O = (2S,6S)-2,6-diaminopimelate + succinate. It functions in the pathway amino-acid biosynthesis; L-lysine biosynthesis via DAP pathway; LL-2,6-diaminopimelate from (S)-tetrahydrodipicolinate (succinylase route): step 3/3. Catalyzes the hydrolysis of N-succinyl-L,L-diaminopimelic acid (SDAP), forming succinate and LL-2,6-diaminopimelate (DAP), an intermediate involved in the bacterial biosynthesis of lysine and meso-diaminopimelic acid, an essential component of bacterial cell walls. This chain is Succinyl-diaminopimelate desuccinylase, found in Vibrio vulnificus (strain CMCP6).